The sequence spans 185 residues: Crossover junction endodeoxyribonuclease RuvC (185 aa).

Active-site residues include D16, E75, and D147. Positions 16, 75, and 147 each coordinate Mg(2+).

Belongs to the RuvC family. In terms of assembly, homodimer which binds Holliday junction (HJ) DNA. The HJ becomes 2-fold symmetrical on binding to RuvC with unstacked arms; it has a different conformation from HJ DNA in complex with RuvA. In the full resolvosome a probable DNA-RuvA(4)-RuvB(12)-RuvC(2) complex forms which resolves the HJ. It depends on Mg(2+) as a cofactor.

It is found in the cytoplasm. The catalysed reaction is Endonucleolytic cleavage at a junction such as a reciprocal single-stranded crossover between two homologous DNA duplexes (Holliday junction).. Its function is as follows. The RuvA-RuvB-RuvC complex processes Holliday junction (HJ) DNA during genetic recombination and DNA repair. Endonuclease that resolves HJ intermediates. Cleaves cruciform DNA by making single-stranded nicks across the HJ at symmetrical positions within the homologous arms, yielding a 5'-phosphate and a 3'-hydroxyl group; requires a central core of homology in the junction. The consensus cleavage sequence is 5'-(A/T)TT(C/G)-3'. Cleavage occurs on the 3'-side of the TT dinucleotide at the point of strand exchange. HJ branch migration catalyzed by RuvA-RuvB allows RuvC to scan DNA until it finds its consensus sequence, where it cleaves and resolves the cruciform DNA. The chain is Crossover junction endodeoxyribonuclease RuvC from Aromatoleum aromaticum (strain DSM 19018 / LMG 30748 / EbN1) (Azoarcus sp. (strain EbN1)).